Reading from the N-terminus, the 121-residue chain is MAPKKAPAAAEKKVKKAPTTEKKNKKKRSETFAIYIFKVLKQVHPDVGISKKAMNIMNSFINDSFERIALESSKLVRFNKRRTLSSREVQTAVKLLLPGELARHAISEGTKAVTKFSSSTN.

Residues 1–27 are disordered; it reads MAPKKAPAAAEKKVKKAPTTEKKNKKK. Residue alanine 2 is modified to N,N,N-trimethylalanine. N6-acetyllysine is present on residues lysine 5 and lysine 41. Residue lysine 115 forms a Glycyl lysine isopeptide (Lys-Gly) (interchain with G-Cter in ubiquitin) linkage.

This sequence belongs to the histone H2B family. In terms of assembly, the nucleosome is a histone octamer containing two molecules each of H2A, H2B, H3 and H4 assembled in one H3-H4 heterotetramer and two H2A-H2B heterodimers. The octamer wraps approximately 147 bp of DNA. In terms of processing, monoubiquitination of Lys-115 gives a specific tag for epigenetic transcriptional activation and is also prerequisite for histone H3 'Lys-4' and 'Lys-79' methylation. Acetylation occurs almost exclusively in the MAC.

It localises to the nucleus. Its subcellular location is the chromosome. Functionally, core component of nucleosome. Nucleosomes wrap and compact DNA into chromatin, limiting DNA accessibility to the cellular machineries which require DNA as a template. Histones thereby play a central role in transcription regulation, DNA repair, DNA replication and chromosomal stability. DNA accessibility is regulated via a complex set of post-translational modifications of histones, also called histone code, and nucleosome remodeling. The polypeptide is Histone H2B (Tetrahymena pyriformis).